Reading from the N-terminus, the 355-residue chain is Cytoplasmic tRNA 2-thiolation protein 1 (355 aa).

The segment at 320–341 is disordered; it reads GIGRPRGVNGDHNKETKKPGSV. A compositionally biased stretch (basic and acidic residues) spans 328–337; that stretch reads NGDHNKETKK.

It belongs to the TtcA family. CTU1/NCS6/ATPBD3 subfamily.

It is found in the cytoplasm. The protein operates within tRNA modification; 5-methoxycarbonylmethyl-2-thiouridine-tRNA biosynthesis. Its function is as follows. Plays a central role in 2-thiolation of mcm(5)S(2)U at tRNA wobble positions of tRNA(Lys), tRNA(Glu) and tRNA(Gln). Directly binds tRNAs and probably acts by catalyzing adenylation of tRNAs, an intermediate required for 2-thiolation. It is unclear whether it acts as a sulfurtransferase that transfers sulfur from thiocarboxylated URM1 onto the uridine of tRNAs at wobble position. The protein is Cytoplasmic tRNA 2-thiolation protein 1 of Arabidopsis thaliana (Mouse-ear cress).